The chain runs to 418 residues: Light-independent protochlorophyllide reductase subunit N (418 aa).

Positions 17, 42, and 103 each coordinate [4Fe-4S] cluster.

This sequence belongs to the BchN/ChlN family. In terms of assembly, protochlorophyllide reductase is composed of three subunits; ChlL, ChlN and ChlB. Forms a heterotetramer of two ChlB and two ChlN subunits. [4Fe-4S] cluster is required as a cofactor.

The catalysed reaction is chlorophyllide a + oxidized 2[4Fe-4S]-[ferredoxin] + 2 ADP + 2 phosphate = protochlorophyllide a + reduced 2[4Fe-4S]-[ferredoxin] + 2 ATP + 2 H2O. It functions in the pathway porphyrin-containing compound metabolism; chlorophyll biosynthesis (light-independent). Its function is as follows. Component of the dark-operative protochlorophyllide reductase (DPOR) that uses Mg-ATP and reduced ferredoxin to reduce ring D of protochlorophyllide (Pchlide) to form chlorophyllide a (Chlide). This reaction is light-independent. The NB-protein (ChlN-ChlB) is the catalytic component of the complex. The protein is Light-independent protochlorophyllide reductase subunit N of Prochlorococcus marinus (strain SARG / CCMP1375 / SS120).